The sequence spans 611 residues: Dihydroxy-acid dehydratase (611 aa).

Asp81 lines the Mg(2+) pocket. Cys122 is a binding site for [2Fe-2S] cluster. Mg(2+) is bound by residues Asp123 and Lys124. Position 124 is an N6-carboxylysine (Lys124). Cys195 is a binding site for [2Fe-2S] cluster. Position 491 (Glu491) interacts with Mg(2+). The active-site Proton acceptor is Ser517.

It belongs to the IlvD/Edd family. Homodimer. Requires [2Fe-2S] cluster as cofactor. It depends on Mg(2+) as a cofactor.

The enzyme catalyses (2R)-2,3-dihydroxy-3-methylbutanoate = 3-methyl-2-oxobutanoate + H2O. The catalysed reaction is (2R,3R)-2,3-dihydroxy-3-methylpentanoate = (S)-3-methyl-2-oxopentanoate + H2O. It participates in amino-acid biosynthesis; L-isoleucine biosynthesis; L-isoleucine from 2-oxobutanoate: step 3/4. Its pathway is amino-acid biosynthesis; L-valine biosynthesis; L-valine from pyruvate: step 3/4. In terms of biological role, functions in the biosynthesis of branched-chain amino acids. Catalyzes the dehydration of (2R,3R)-2,3-dihydroxy-3-methylpentanoate (2,3-dihydroxy-3-methylvalerate) into 2-oxo-3-methylpentanoate (2-oxo-3-methylvalerate) and of (2R)-2,3-dihydroxy-3-methylbutanoate (2,3-dihydroxyisovalerate) into 2-oxo-3-methylbutanoate (2-oxoisovalerate), the penultimate precursor to L-isoleucine and L-valine, respectively. The chain is Dihydroxy-acid dehydratase from Glaesserella parasuis serovar 5 (strain SH0165) (Haemophilus parasuis).